Reading from the N-terminus, the 145-residue chain is 6-pyruvoyl tetrahydrobiopterin synthase (145 aa).

The residue at position 19 (serine 19) is a Phosphoserine; by PKG. Histidine 24 lines the Zn(2+) pocket. Serine 28 is modified (phosphoserine). The active-site Proton acceptor is cysteine 43. 2 residues coordinate Zn(2+): histidine 49 and histidine 51. Histidine 90 serves as the catalytic Charge relay system. Position 128 is a phosphotyrosine (tyrosine 128). Catalysis depends on glutamate 134, which acts as the Charge relay system.

Belongs to the PTPS family. Homohexamer formed of two homotrimers in a head to head fashion. Zn(2+) serves as cofactor. Phosphorylation of Ser-19 is required for maximal enzyme activity.

The catalysed reaction is 7,8-dihydroneopterin 3'-triphosphate = 6-pyruvoyl-5,6,7,8-tetrahydropterin + triphosphate + H(+). Its pathway is cofactor biosynthesis; tetrahydrobiopterin biosynthesis; tetrahydrobiopterin from 7,8-dihydroneopterin triphosphate: step 1/3. Its function is as follows. Involved in the biosynthesis of tetrahydrobiopterin, an essential cofactor of aromatic amino acid hydroxylases. Catalyzes the transformation of 7,8-dihydroneopterin triphosphate into 6-pyruvoyl tetrahydropterin. The sequence is that of 6-pyruvoyl tetrahydrobiopterin synthase (PTS) from Homo sapiens (Human).